The following is a 143-amino-acid chain: D-aminoacyl-tRNA deacylase (143 aa).

Residues 135–136 (GP) carry the Gly-cisPro motif, important for rejection of L-amino acids motif.

It belongs to the DTD family. As to quaternary structure, homodimer.

Its subcellular location is the cytoplasm. It catalyses the reaction glycyl-tRNA(Ala) + H2O = tRNA(Ala) + glycine + H(+). It carries out the reaction a D-aminoacyl-tRNA + H2O = a tRNA + a D-alpha-amino acid + H(+). In terms of biological role, an aminoacyl-tRNA editing enzyme that deacylates mischarged D-aminoacyl-tRNAs. Also deacylates mischarged glycyl-tRNA(Ala), protecting cells against glycine mischarging by AlaRS. Acts via tRNA-based rather than protein-based catalysis; rejects L-amino acids rather than detecting D-amino acids in the active site. By recycling D-aminoacyl-tRNA to D-amino acids and free tRNA molecules, this enzyme counteracts the toxicity associated with the formation of D-aminoacyl-tRNA entities in vivo and helps enforce protein L-homochirality. This chain is D-aminoacyl-tRNA deacylase, found in Mycobacterium avium (strain 104).